The following is a 463-amino-acid chain: Dihydrolipoyllysine-residue succinyltransferase component of 2-oxoglutarate dehydrogenase complex, mitochondrial (463 aa).

In terms of domain architecture, Lipoyl-binding spans 73 to 148; the sequence is STSIEVPPMA…TVGEELAQVE (76 aa). Lys114 is subject to N6-lipoyllysine. Residues 144-237 are disordered; it reads LAQVEPGEAP…FTPFPRTETR (94 aa). Residues 148 to 157 show a composition bias toward low complexity; sequence EPGEAPAEGS. Positions 184-212 are enriched in basic and acidic residues; it reads TASKKEAAPKKEAAPKKEVTEPKKADQPK. Repeat copies occupy residues 185 to 190, 191 to 196, and 197 to 202. Positions 185-209 are 4 X 6 AA approximate tandem repeats of A-[SP]-K-K-E-[AV]; sequence ASKKEAAPKKEAAPKKEVTEPKKAD. The 4; approximate repeat unit spans residues 204–209; that stretch reads EPKKAD. The residue at position 340 (Thr340) is a Phosphothreonine. Catalysis depends on residues His435 and Asp439.

The protein belongs to the 2-oxoacid dehydrogenase family. In terms of assembly, component of the 2-oxoglutarate dehydrogenase complex (OGDC), also called alpha-ketoglutarate dehydrogenase (KGDH) complex. The copmplex is composed of the catalytic subunits OGDH (2-oxoglutarate dehydrogenase KGD1; also called E1 subunit), DLST (dihydrolipoamide succinyltransferase KGD2; also called E2 subunit) and DLD (dihydrolipoamide dehydrogenase LPD1; also called E3 subunit), and the assembly factor KGD4. It depends on (R)-lipoate as a cofactor.

The protein localises to the mitochondrion. The enzyme catalyses N(6)-[(R)-dihydrolipoyl]-L-lysyl-[protein] + succinyl-CoA = N(6)-[(R)-S(8)-succinyldihydrolipoyl]-L-lysyl-[protein] + CoA. The protein operates within amino-acid degradation; L-lysine degradation via saccharopine pathway; glutaryl-CoA from L-lysine: step 6/6. Functionally, the 2-oxoglutarate dehydrogenase complex catalyzes the overall conversion of 2-oxoglutarate to succinyl-CoA and CO(2). It contains multiple copies of three enzymatic components: 2-oxoglutarate dehydrogenase (E1), dihydrolipoamide succinyltransferase (E2) and lipoamide dehydrogenase (E3). In Saccharomyces cerevisiae (strain ATCC 204508 / S288c) (Baker's yeast), this protein is Dihydrolipoyllysine-residue succinyltransferase component of 2-oxoglutarate dehydrogenase complex, mitochondrial (KGD2).